A 230-amino-acid polypeptide reads, in one-letter code: ATP phosphoribosyltransferase (230 aa).

It belongs to the ATP phosphoribosyltransferase family. Short subfamily. As to quaternary structure, heteromultimer composed of HisG and HisZ subunits.

The protein localises to the cytoplasm. The enzyme catalyses 1-(5-phospho-beta-D-ribosyl)-ATP + diphosphate = 5-phospho-alpha-D-ribose 1-diphosphate + ATP. Its pathway is amino-acid biosynthesis; L-histidine biosynthesis; L-histidine from 5-phospho-alpha-D-ribose 1-diphosphate: step 1/9. In terms of biological role, catalyzes the condensation of ATP and 5-phosphoribose 1-diphosphate to form N'-(5'-phosphoribosyl)-ATP (PR-ATP). Has a crucial role in the pathway because the rate of histidine biosynthesis seems to be controlled primarily by regulation of HisG enzymatic activity. This chain is ATP phosphoribosyltransferase, found in Agrobacterium fabrum (strain C58 / ATCC 33970) (Agrobacterium tumefaciens (strain C58)).